A 251-amino-acid chain; its full sequence is 1-(5-phosphoribosyl)-5-[(5-phosphoribosylamino)methylideneamino] imidazole-4-carboxamide isomerase (251 aa).

Asp-8 serves as the catalytic Proton acceptor. The Proton donor role is filled by Asp-131.

The protein belongs to the HisA/HisF family.

It localises to the cytoplasm. It catalyses the reaction 1-(5-phospho-beta-D-ribosyl)-5-[(5-phospho-beta-D-ribosylamino)methylideneamino]imidazole-4-carboxamide = 5-[(5-phospho-1-deoxy-D-ribulos-1-ylimino)methylamino]-1-(5-phospho-beta-D-ribosyl)imidazole-4-carboxamide. Its pathway is amino-acid biosynthesis; L-histidine biosynthesis; L-histidine from 5-phospho-alpha-D-ribose 1-diphosphate: step 4/9. The polypeptide is 1-(5-phosphoribosyl)-5-[(5-phosphoribosylamino)methylideneamino] imidazole-4-carboxamide isomerase (Burkholderia lata (strain ATCC 17760 / DSM 23089 / LMG 22485 / NCIMB 9086 / R18194 / 383)).